Here is a 223-residue protein sequence, read N- to C-terminus: Killer cell lectin-like receptor subfamily B member 1B allele A (223 aa).

Over 1–45 (MDTAVVYADLHLARTGEPKREPPPSLSPDTCQCPRWHRLALKLGC) the chain is Cytoplasmic. Residues 5-10 (VVYADL) carry the ITIM motif motif. The LCK-binding motif signature appears at 31 to 34 (CQCP). Residues 46–66 (ACLILLVLSVIGLGVLVLTLL) form a helical; Signal-anchor for type II membrane protein membrane-spanning segment. Topologically, residues 67–223 (QKPLIQNSPA…LKRESTCNDS (157 aa)) are extracellular. Residues 101 to 211 (HQDKCFHVSQ…CDSDNIWICQ (111 aa)) form the C-type lectin domain. Intrachain disulfides connect C122-C210 and C189-C202.

Homodimer; disulfide-linked. Interacts with tyrosine kinase LCK. Binds PTPN6/SHP-1 in a phosphorylation-dependent manner. Expressed in a subset of natural killer cells.

Its subcellular location is the membrane. In terms of biological role, receptor for CLEC2D/OCIL. Ligand-binding contributes to inhibition of cytotoxic natural killer (NK) cells. May mediate MHC class I-independent 'missing-self' recognition of allografts, tumor cells and virus-infected cells. The polypeptide is Killer cell lectin-like receptor subfamily B member 1B allele A (Rattus norvegicus (Rat)).